A 342-amino-acid polypeptide reads, in one-letter code: tRNA N6-adenosine threonylcarbamoyltransferase (342 aa).

H111 and H115 together coordinate Fe cation. Residues 133 to 137, D166, G179, D183, and N273 each bind substrate; that span reads AVSGG. D301 provides a ligand contact to Fe cation.

The protein belongs to the KAE1 / TsaD family. Fe(2+) is required as a cofactor.

It localises to the cytoplasm. The enzyme catalyses L-threonylcarbamoyladenylate + adenosine(37) in tRNA = N(6)-L-threonylcarbamoyladenosine(37) in tRNA + AMP + H(+). Required for the formation of a threonylcarbamoyl group on adenosine at position 37 (t(6)A37) in tRNAs that read codons beginning with adenine. Is involved in the transfer of the threonylcarbamoyl moiety of threonylcarbamoyl-AMP (TC-AMP) to the N6 group of A37, together with TsaE and TsaB. TsaD likely plays a direct catalytic role in this reaction. This is tRNA N6-adenosine threonylcarbamoyltransferase from Syntrophotalea carbinolica (strain DSM 2380 / NBRC 103641 / GraBd1) (Pelobacter carbinolicus).